Consider the following 617-residue polypeptide: Tetratricopeptide repeat protein 39B (617 aa).

3 TPR repeats span residues 328 to 361, 520 to 553, and 561 to 594; these read SLILFYHARIELLKGNTEKAQETFRKCISVQEEW, CLVKLLKGCCLKNLERPLQAELCFNHVVESEKLL, and PFTLFELAFLYKSQGEIDKAIKVLETARNNYKDY.

The protein belongs to the TTC39 family. As to expression, high expression in lung and spleen. Low lower expression in liver and small intestine. Weak expression in heart, brain, kidney, adipose, and adrenal gland.

Its function is as follows. Regulates high density lipoprotein (HDL) cholesterol metabolism by promoting the ubiquitination and degradation of the oxysterols receptors LXR (NR1H2 and NR1H3). The polypeptide is Tetratricopeptide repeat protein 39B (Mus musculus (Mouse)).